The following is a 178-amino-acid chain: Translation initiation factor IF-3 (178 aa).

Positions Met1–Glu20 are disordered.

It belongs to the IF-3 family. Monomer.

It localises to the cytoplasm. In terms of biological role, IF-3 binds to the 30S ribosomal subunit and shifts the equilibrium between 70S ribosomes and their 50S and 30S subunits in favor of the free subunits, thus enhancing the availability of 30S subunits on which protein synthesis initiation begins. This Rhizobium leguminosarum bv. trifolii (strain WSM2304) protein is Translation initiation factor IF-3.